The following is a 349-amino-acid chain: Secretory carrier-associated membrane protein 3 (349 aa).

A disordered region spans residues 1–90 (MAQSRDTGNP…EPRNYGSYST (90 aa)). The Cytoplasmic portion of the chain corresponds to 1-168 (MAQSRDTGNP…PQEFQKTVST (168 aa)). Ser-32 carries the phosphoserine modification. Thr-37 is modified (phosphothreonine). Residues Tyr-41 and Tyr-53 each carry the phosphotyrosine modification. A compositionally biased stretch (pro residues) spans 49-68 (PPPAYEPPAPAPAPLPPPSA). Ser-74 and Ser-78 each carry phosphoserine. Tyr-85 bears the Phosphotyrosine mark. Ser-87 is subject to Phosphoserine. A run of 4 helical transmembrane segments spans residues 169 to 189 (MYYLWMCSTLALLLNFFACLA), 200 to 220 (GFGLSMLWLLLFTPCSFVCWY), 236 to 256 (FVFFFIFFVQDVFFVLQAIGI), and 277 to 297 (VAVLMLLVALLFTGIAVLGIV). Over 298–349 (MLKRIHSLYRQTGASFQKAQQEFAAGVFSNPAVRTAAANAAAGAAENAFRAP) the chain is Cytoplasmic. Lys-315 participates in a covalent cross-link: Glycyl lysine isopeptide (Lys-Gly) (interchain with G-Cter in SUMO1).

This sequence belongs to the SCAMP family. As to quaternary structure, interacts with NEDD4 and NEDD4L and TSG101. Interacts with RNF126. Post-translationally, monoubiquitinated.

The protein resides in the membrane. Its function is as follows. Functions in post-Golgi recycling pathways. Acts as a recycling carrier to the cell surface. This Mus musculus (Mouse) protein is Secretory carrier-associated membrane protein 3 (Scamp3).